Here is a 315-residue protein sequence, read N- to C-terminus: GPN-loop GTPase 2 (315 aa).

12–17 serves as a coordination point for GTP; sequence GSGKST. Residues 69–71 carry the Gly-Pro-Asn (GPN)-loop; involved in dimer interface motif; that stretch reads GPN. Residue 172 to 175 coordinates GTP; it reads SKAD.

This sequence belongs to the GPN-loop GTPase family. Heterodimers with gpn1 or fet5/gpn3. Binds to RNA polymerase II (RNAPII).

It localises to the cytoplasm. Its subcellular location is the nucleus. In terms of biological role, small GTPase required for proper nuclear import of RNA polymerase II and III (RNAPII and RNAPIII). May act at an RNAP assembly step prior to nuclear import. The sequence is that of GPN-loop GTPase 2 from Schizosaccharomyces pombe (strain 972 / ATCC 24843) (Fission yeast).